Reading from the N-terminus, the 493-residue chain is Dipeptide permease D (493 aa).

The next 13 membrane-spanning stretches (helical) occupy residues 14–34 (VVAL…LLIL), 49–69 (ELFS…GYLA), 91–111 (LVLG…AIIV), 138–158 (GGFS…PIAC), 167–187 (WAMG…IFLC), 212–232 (NWGW…VLFW), 235–255 (WSVY…AKIY), 267–287 (LGLI…AQQG), 312–332 (MFQS…AWLV), 344–364 (IWGK…ILTL), 379–399 (LMVL…PVAM), 413–433 (VLTG…AGVI), and 458–478 (VFEQ…LIWL).

It belongs to the major facilitator superfamily. Proton-dependent oligopeptide transporter (POT/PTR) (TC 2.A.17) family. DtpD subfamily.

It localises to the cell inner membrane. Its function is as follows. Probable proton-dependent permease that transports dipeptides. The sequence is that of Dipeptide permease D from Salmonella paratyphi C (strain RKS4594).